The primary structure comprises 1250 residues: DNA-directed RNA polymerase subunit beta (1250 aa).

A disordered region spans residues Gln1215–Leu1250.

It belongs to the RNA polymerase beta chain family. As to quaternary structure, the RNAP catalytic core consists of 2 alpha, 1 beta, 1 beta' and 1 omega subunit. When a sigma factor is associated with the core the holoenzyme is formed, which can initiate transcription.

It carries out the reaction RNA(n) + a ribonucleoside 5'-triphosphate = RNA(n+1) + diphosphate. DNA-dependent RNA polymerase catalyzes the transcription of DNA into RNA using the four ribonucleoside triphosphates as substrates. The chain is DNA-directed RNA polymerase subunit beta from Acetivibrio thermocellus (strain ATCC 27405 / DSM 1237 / JCM 9322 / NBRC 103400 / NCIMB 10682 / NRRL B-4536 / VPI 7372) (Clostridium thermocellum).